Here is a 315-residue protein sequence, read N- to C-terminus: L-lactate dehydrogenase (315 aa).

NAD(+) is bound by residues Val-14, Asp-35, Tyr-67, and 81–82 (GV). Residues Gln-84, Arg-91, and 123–126 (NPVD) each bind substrate. Residues 121-123 (ASN) and Ser-146 contribute to the NAD(+) site. 151-154 (DSAR) provides a ligand contact to substrate. Residue His-178 is the Proton acceptor of the active site. Tyr-219 is subject to Phosphotyrosine. A substrate-binding site is contributed by Thr-228.

Belongs to the LDH/MDH superfamily. LDH family. In terms of assembly, homotetramer.

It is found in the cytoplasm. The catalysed reaction is (S)-lactate + NAD(+) = pyruvate + NADH + H(+). It functions in the pathway fermentation; pyruvate fermentation to lactate; (S)-lactate from pyruvate: step 1/1. Catalyzes the conversion of lactate to pyruvate. This Malacoplasma penetrans (strain HF-2) (Mycoplasma penetrans) protein is L-lactate dehydrogenase.